The following is a 111-amino-acid chain: Nucleoid-associated protein Cpar_0834 (111 aa).

It belongs to the YbaB/EbfC family. As to quaternary structure, homodimer.

It localises to the cytoplasm. The protein localises to the nucleoid. Functionally, binds to DNA and alters its conformation. May be involved in regulation of gene expression, nucleoid organization and DNA protection. This Chlorobaculum parvum (strain DSM 263 / NCIMB 8327) (Chlorobium vibrioforme subsp. thiosulfatophilum) protein is Nucleoid-associated protein Cpar_0834.